Reading from the N-terminus, the 277-residue chain is MNWFEVALLGLVQGLTEFLPISSSAHLRIVGQFLPNAEDPGAAFTAITQLGTETAVVVYFWRDIVRIVKAWAGSLAGKVSRQDPDARMGWLVILGSLPIIVLGLLFQDQIESVLRSMWIVATMLIVFGLILAVADAVGKQERDLTQLTYKHGILYGFAQAMALIPGVSRSGGTITAGLLMGYTREAAARYSFLLAIPAVFGSGLYQLYKVVSKDGITGPYGLPETALATVIAFVVGYVIIGWFLKFVSTRSYRLFVWYRIFLGLALYLLLGFGVISA.

6 consecutive transmembrane segments (helical) span residues 88-108, 117-137, 157-179, 191-211, 227-247, and 255-275; these read MGWL…LFQD, MWIV…ADAV, FAQA…AGLL, SFLL…YKVV, LATV…LKFV, and FVWY…FGVI.

The protein belongs to the UppP family.

Its subcellular location is the cell membrane. The enzyme catalyses di-trans,octa-cis-undecaprenyl diphosphate + H2O = di-trans,octa-cis-undecaprenyl phosphate + phosphate + H(+). Functionally, catalyzes the dephosphorylation of undecaprenyl diphosphate (UPP). Confers resistance to bacitracin. This chain is Undecaprenyl-diphosphatase, found in Pseudarthrobacter chlorophenolicus (strain ATCC 700700 / DSM 12829 / CIP 107037 / JCM 12360 / KCTC 9906 / NCIMB 13794 / A6) (Arthrobacter chlorophenolicus).